A 185-amino-acid chain; its full sequence is Transmembrane protein 140 (185 aa).

Over 1 to 11 the chain is Cytoplasmic; it reads MAGPRPRWRDQ. The chain crosses the membrane as a helical span at residues 12–32; that stretch reads LLFMSIIVLVIVVICLMFYAL. At 33–77 the chain is on the extracellular side; the sequence is LWEAGNLTDLPNLRIGFYNFCLWNEDTSTLQCHQFPELEALGVPR. N-linked (GlcNAc...) asparagine glycosylation occurs at N38. A helical transmembrane segment spans residues 78–98; the sequence is VGLGLARLGVYGSLVLTLFAP. At 99-114 the chain is on the cytoplasmic side; sequence QPLLLAQCNSDERAWR. The helical transmembrane segment at 115-135 threads the bilayer; it reads LAVGFLAVSSVLLAGGLGLFL. Topologically, residues 136 to 150 are extracellular; that stretch reads SYVWKWVRLSLPGPG. The helical transmembrane segment at 151-171 threads the bilayer; sequence FLALGSAQALLILLLIAMAVF. Residues 172-185 are Cytoplasmic-facing; sequence PLRAERAESKLESC.

In terms of tissue distribution, expression significantly higher in gliomas than in normal brain tissues.

The protein localises to the membrane. The chain is Transmembrane protein 140 (TMEM140) from Homo sapiens (Human).